The chain runs to 547 residues: Chaperonin GroEL (547 aa).

ATP is bound by residues Thr30 to Pro33, Lys51, Asp87 to Thr91, Gly415, Asn479 to Ala481, and Asp495.

It belongs to the chaperonin (HSP60) family. As to quaternary structure, forms a cylinder of 14 subunits composed of two heptameric rings stacked back-to-back. Interacts with the co-chaperonin GroES.

The protein localises to the cytoplasm. The catalysed reaction is ATP + H2O + a folded polypeptide = ADP + phosphate + an unfolded polypeptide.. Together with its co-chaperonin GroES, plays an essential role in assisting protein folding. The GroEL-GroES system forms a nano-cage that allows encapsulation of the non-native substrate proteins and provides a physical environment optimized to promote and accelerate protein folding. In Marinomonas sp. (strain MWYL1), this protein is Chaperonin GroEL.